The following is a 244-amino-acid chain: Ribosome-inactivating protein cucurmosin (244 aa).

Catalysis depends on residues Y70, Y109, E158, and R161. 2 N-linked (GlcNAc...) asparagine glycosylation sites follow: N189 and N225.

The protein belongs to the ribosome-inactivating protein family. Type 1 RIP subfamily. In terms of processing, the N-linked glycan consists of GlcNAc2Man3Xyl.

The enzyme catalyses Endohydrolysis of the N-glycosidic bond at one specific adenosine on the 28S rRNA.. In terms of biological role, has cytotoxic activity towards cancer cells, but not normal cells. Inhibits the growth of the human leukemia cell line K562, the murine melanoma cell line B16 and the lung adenocarcinoma cell line A549 with IC(50) values of 88.1 nM, 63.4 nM and 359.3 nM respectively. The sequence is that of Ribosome-inactivating protein cucurmosin from Cucurbita moschata (Winter crookneck squash).